A 564-amino-acid chain; its full sequence is Dihydroxy-acid dehydratase (564 aa).

Cys-53 provides a ligand contact to [2Fe-2S] cluster. Residue Asp-85 participates in Mg(2+) binding. Residue Cys-126 participates in [2Fe-2S] cluster binding. Asp-127 and Lys-128 together coordinate Mg(2+). Lys-128 carries the post-translational modification N6-carboxylysine. A [2Fe-2S] cluster-binding site is contributed by Cys-203. Residue Glu-454 participates in Mg(2+) binding. Catalysis depends on Ser-480, which acts as the Proton acceptor.

It belongs to the IlvD/Edd family. As to quaternary structure, homodimer. [2Fe-2S] cluster is required as a cofactor. The cofactor is Mg(2+).

The enzyme catalyses (2R)-2,3-dihydroxy-3-methylbutanoate = 3-methyl-2-oxobutanoate + H2O. It carries out the reaction (2R,3R)-2,3-dihydroxy-3-methylpentanoate = (S)-3-methyl-2-oxopentanoate + H2O. It participates in amino-acid biosynthesis; L-isoleucine biosynthesis; L-isoleucine from 2-oxobutanoate: step 3/4. The protein operates within amino-acid biosynthesis; L-valine biosynthesis; L-valine from pyruvate: step 3/4. In terms of biological role, functions in the biosynthesis of branched-chain amino acids. Catalyzes the dehydration of (2R,3R)-2,3-dihydroxy-3-methylpentanoate (2,3-dihydroxy-3-methylvalerate) into 2-oxo-3-methylpentanoate (2-oxo-3-methylvalerate) and of (2R)-2,3-dihydroxy-3-methylbutanoate (2,3-dihydroxyisovalerate) into 2-oxo-3-methylbutanoate (2-oxoisovalerate), the penultimate precursor to L-isoleucine and L-valine, respectively. The chain is Dihydroxy-acid dehydratase from Clavibacter michiganensis subsp. michiganensis (strain NCPPB 382).